We begin with the raw amino-acid sequence, 38 residues long: Potassium channel toxin alpha-KTx 3.3 (38 aa).

Intrachain disulfides connect C8/C28, C14/C33, and C18/C35. The interval 26-33 is interaction with Ca(2+)-activated K(+) channels; the sequence is GKCMNRKC.

The protein belongs to the short scorpion toxin superfamily. Potassium channel inhibitor family. Alpha-KTx 03 subfamily. In terms of tissue distribution, expressed by the venom gland.

It is found in the secreted. Its function is as follows. Potent inhibitor of shaker potassium channels as well as the mammalian homologs of shaker. The sequence is that of Potassium channel toxin alpha-KTx 3.3 from Leiurus hebraeus (Hebrew deathstalker scorpion).